We begin with the raw amino-acid sequence, 279 residues long: Large ribosomal subunit protein uL5c (279 aa).

Disordered stretches follow at residues 1-23 (MAAT…TASS) and 40-63 (LRVA…SPSG). A chloroplast-targeting transit peptide spans 1-43 (MAATAVTLPSSPAPFPVTTTASSSRNVRLLLRSPPPRRALRVA). The segment covering 41 to 50 (RVAASAAADA) has biased composition (low complexity). Over residues 51–60 (PPKPAPPPTS) the composition is skewed to pro residues.

This sequence belongs to the universal ribosomal protein uL5 family. As to quaternary structure, part of the 50S ribosomal subunit; contacts the 5S rRNA.

The protein localises to the plastid. Its subcellular location is the chloroplast. Its function is as follows. Binds 5S rRNA, forms part of the central protuberance of the 50S subunit. This Oryza sativa subsp. japonica (Rice) protein is Large ribosomal subunit protein uL5c (RPL5).